The following is a 2221-amino-acid chain: RNA-directed RNA polymerase L (2221 aa).

An endonuclease region spans residues K29–E292. The Mn(2+) site is built by E54, D91, and E104. The active site involves K117. The RdRp catalytic domain maps to L1171–I1369. Residue D1327 participates in Mg(2+) binding.

This sequence belongs to the Bunyavirales RNA polymerase family. In terms of assembly, homomultimer; the oligomeric structure is essential for the polymerase activity. Interacts with nucleoprotein N. Interacts with protein Z; this interaction inhibits viral transcription and replication, Z partially blocks the product exit tunnel for the releasing nascent RNA product. Mn(2+) serves as cofactor. The cofactor is Mg(2+).

The protein localises to the virion. Its subcellular location is the host cytoplasm. The catalysed reaction is RNA(n) + a ribonucleoside 5'-triphosphate = RNA(n+1) + diphosphate. Its function is as follows. RNA-dependent RNA polymerase, which is responsible for the replication and transcription of the viral RNA genome using antigenomic RNA as an intermediate. During transcription, synthesizes subgenomic RNAs and assures their capping by a cap-snatching mechanism, which involves the endonuclease activity cleaving the host capped pre-mRNAs. These short capped RNAs are then used as primers for viral transcription. The 3'-end of subgenomic mRNAs molecules are heterogeneous and not polyadenylated. The replicase function is to direct synthesis of antigenomic and genomic RNA which are encapsidated and non capped. As a consequence of the use of the same enzyme for both transcription and replication, these mechanisms need to be well coordinated. These processes may be regulated by proteins N and Z in a dose-dependent manner. Z protein inhibits the viral polymerase L und thus the viral transcription and RNA synthesis. This Sigmodon hispidus (Hispid cotton rat) protein is RNA-directed RNA polymerase L.